A 485-amino-acid polypeptide reads, in one-letter code: Threonine synthase-like 2 (485 aa).

Residue Lys113 is modified to N6-(pyridoxal phosphate)lysine.

It belongs to the threonine synthase family. Pyridoxal 5'-phosphate is required as a cofactor.

In terms of biological role, acts as a catabolic phospho-lyase on both gamma- and beta-phosphorylated substrates. Degrades O-phospho-threonine (PThr) to alpha-ketobutyrate, ammonia and phosphate. The polypeptide is Threonine synthase-like 2 (Thnsl2) (Rattus norvegicus (Rat)).